Consider the following 444-residue polypeptide: CCA-adding enzyme (444 aa).

ATP is bound by residues S57 and R60. S57 and R60 together coordinate CTP. Residues D69, D71, and D124 each coordinate Mg(2+). Positions 147, 168, and 177 each coordinate ATP. The CTP site is built by H147, K168, and Y177.

Belongs to the tRNA nucleotidyltransferase/poly(A) polymerase family. Archaeal CCA-adding enzyme subfamily. Homodimer. Requires Mg(2+) as cofactor.

The enzyme catalyses a tRNA precursor + 2 CTP + ATP = a tRNA with a 3' CCA end + 3 diphosphate. The catalysed reaction is a tRNA with a 3' CCA end + 2 CTP + ATP = a tRNA with a 3' CCACCA end + 3 diphosphate. In terms of biological role, catalyzes the addition and repair of the essential 3'-terminal CCA sequence in tRNAs without using a nucleic acid template. Adds these three nucleotides in the order of C, C, and A to the tRNA nucleotide-73, using CTP and ATP as substrates and producing inorganic pyrophosphate. tRNA 3'-terminal CCA addition is required both for tRNA processing and repair. Also involved in tRNA surveillance by mediating tandem CCA addition to generate a CCACCA at the 3' terminus of unstable tRNAs. While stable tRNAs receive only 3'-terminal CCA, unstable tRNAs are marked with CCACCA and rapidly degraded. The polypeptide is CCA-adding enzyme (Methanococcus maripaludis (strain C5 / ATCC BAA-1333)).